We begin with the raw amino-acid sequence, 85 residues long: Large ribosomal subunit protein bL27 (85 aa).

The interval 1-21 (MAHKKGASSSRNGRDSNAQRL) is disordered. Residues 7–19 (ASSSRNGRDSNAQ) are compositionally biased toward polar residues.

The protein belongs to the bacterial ribosomal protein bL27 family.

This chain is Large ribosomal subunit protein bL27, found in Beutenbergia cavernae (strain ATCC BAA-8 / DSM 12333 / CCUG 43141 / JCM 11478 / NBRC 16432 / NCIMB 13614 / HKI 0122).